Reading from the N-terminus, the 3898-residue chain is Genome polyprotein (3898 aa).

The 168-residue stretch at 1–168 (MELNHFELLY…TDCPLWVTSC (168 aa)) folds into the Peptidase C53 domain. Catalysis depends on for N-terminal protease activity residues Glu-22, His-49, and Cys-69. Residues 112-138 (CEVTKRIGRVTGSDGKLYHIYVCIDGC) are zinc-binding TRASH domain. Asn-157 carries N-linked (GlcNAc...) asparagine; by host glycosylation. A disordered region spans residues 221–242 (KGKVKGKNTQDGLYHNKNKPPE). N-linked (GlcNAc...) asparagine; by host glycans are attached at residues Asn-269, Asn-278, and Asn-332. 2 disulfides stabilise this stretch: Cys-305-Cys-349 and Cys-335-Cys-336. 2 N-linked (GlcNAc...) asparagine; by host glycosylation sites follow: Asn-362 and Asn-367. Cystine bridges form between Cys-377/Cys-422 and Cys-381/Cys-405. Residues Asn-410, Asn-425, Asn-500, and Asn-594 are each glycosylated (N-linked (GlcNAc...) asparagine; by host). Cys-693 and Cys-737 form a disulfide bridge. N-linked (GlcNAc...) asparagine; by host glycans are attached at residues Asn-805, Asn-810, Asn-874, Asn-918, and Asn-949. A run of 9 helical transmembrane segments spans residues 1031–1051 (FIVLVVVALLGGRYVLWLIVT), 1070–1090 (VVLIGNLITHTDIEVVVYFLL), 1104–1124 (ILLLFHAMTNNPVKTITVALL), 1140–1164 (QRLPETNFDIQLALTVIVVAVMLLA), 1189–1209 (LSTDLAIATVSTALLTWTYIS), 1217–1237 (LLQYLISTVTGIFLIRVLKGV), 1247–1267 (LPSYRPLFFILVYLISTAVVT), 1281–1301 (VPTLLMVFTMWADILTLILIL), and 1360–1380 (TMLPLIKAILISCISNKWQFI). The 149-residue stretch at 1441–1589 (KELIIKHKVR…DLEHLGWVLR (149 aa)) folds into the Peptidase C74 domain. Active-site for cysteine protease NS2 activity residues include His-1447, Glu-1461, and Cys-1512. A helical membrane pass occupies residues 1568 to 1588 (MLLVGNLGTEVGDLEHLGWVL). A Peptidase S31 domain is found at 1590–1763 (GPAVCKKVTE…LPIFEASSGR (174 aa)). Catalysis depends on charge relay system; for serine protease NS3 activity residues His-1658 and Asp-1695. Residue Asn-1713 is glycosylated (N-linked (GlcNAc...) asparagine; by host). Ser-1752 acts as the Charge relay system; for serine protease NS3 activity in catalysis. Residues 1802-1960 (ITTMNRGEFR…QKHPIEEYIA (159 aa)) form the Helicase ATP-binding domain. ATP is bound at residue 1815 to 1822 (LATGAGKT). Positions 1910 to 1913 (DEYH) match the DEAH box motif. One can recognise a Helicase C-terminal domain in the interval 1978 to 2179 (GLKIPVEEMK…ELPMAVKNIM (202 aa)). Asn-2134, Asn-2217, Asn-2419, Asn-2494, Asn-2787, Asn-2815, and Asn-2891 each carry an N-linked (GlcNAc...) asparagine; by host glycan. A compositionally biased stretch (low complexity) spans 2968-2980 (PTMTTGETPTTFT). Residues 2968 to 2987 (PTMTTGETPTTFTSSGPDPK) form a disordered region. Asn-3103, Asn-3211, and Asn-3316 each carry an N-linked (GlcNAc...) asparagine; by host glycan. Residues Thr-3500 and Leu-3502 each contribute to the GTP site. The RdRp catalytic domain occupies 3519–3642 (PVAVSFDTKA…ITERALGEKF (124 aa)). N-linked (GlcNAc...) asparagine; by host glycosylation is present at Asn-3689. Arg-3697 is a GTP binding site. A glycan (N-linked (GlcNAc...) asparagine; by host) is linked at Asn-3698. Residue Lys-3705 coordinates GTP. Asn-3794 carries an N-linked (GlcNAc...) asparagine; by host glycan.

The protein belongs to the pestivirus polyprotein family. As to quaternary structure, interacts (via N-terminus) with host SP1; this interaction induces proteasomal degradation of SP1 with subsequent down-regulation of HDAC1 and ISG15 expression thereby counteracting the host innate immunity. Interacts (via C-terminus) with host IRF3. Interacts with host OS9. In terms of assembly, homodimer; disulfide-linked. Interacts with host RPSA. As to quaternary structure, homodimer; disulfide-linked. Heterodimer with E1; disulfide-linked. Homodimer; disulfide-linked. Heterodimer with E1; disulfide-linked. Interacts with host TRX2. Interacts with host receptor ADAM17 (via metalloproteinase domain); this interaction allows binding and probably entry of the virus into the host cell. Interacts with host ANXA2; this interaction allows binding and probably entry of the virus into the host cell. Interacts with host MERTK; this interaction allows binding and probably entry of the virus into the host cell. In terms of assembly, interacts with host TRAF6; this interaction inhibits host NF-kappa-B pathway. Interacts with NS5B; this interaction enhances RNA-dependent RNA polymerase activity. Interacts with protein NS4A. As to quaternary structure, interacts with host RAB5, this interaction facilitates the formation of NS4B-related complex. Interacts with host FTH1; this interaction plays a positive role in viral anti-apoptosis. Interacts with RNA-directed RNA polymerase. Interacts with host RSAD2; this interaction inhibits viral replication. In terms of assembly, interacts with NS5A; this interaction promotes viral replication. In terms of processing, heavily glycosylated. The viral RNA of pestiviruses is expressed as a single polyprotein which undergoes post-translational proteolytic processing resulting in the production of at least eleven individual proteins. The N-terminal protease cleaves itself from the nascent polyprotein autocatalytically and thereby generates the N-terminus of the adjacent viral capsid protein C. Post-translationally, cleavage between E2 and p7 is partial.

Its subcellular location is the virion. It localises to the host membrane. The protein localises to the virion membrane. The protein resides in the host cell surface. It is found in the host cytoplasm. The enzyme catalyses Leu is conserved at position P1 for all four cleavage sites. Alanine is found at position P1' of the NS4A-NS4B cleavage site, whereas serine is found at position P1' of the NS3-NS4A, NS4B-NS5A and NS5A-NS5B cleavage sites.. The catalysed reaction is RNA(n) + a ribonucleoside 5'-triphosphate = RNA(n+1) + diphosphate. It catalyses the reaction a ribonucleoside 5'-triphosphate + H2O = a ribonucleoside 5'-diphosphate + phosphate + H(+). It carries out the reaction ATP + H2O = ADP + phosphate + H(+). Its function is as follows. Leader cysteine autoprotease that cleaves itself from the nascent polyprotein during translation of the viral mRNA. Once released, plays a role in the inhibition of host innate immune response by interacting with host IRF3 and inducing its proteasomal degradation. Functionally, packages viral RNA to form a viral nucleocapsid and thereby protects viral RNA. Also plays a role in transcription regulation. Protects the incoming virus against IFN-induced effectors. Plays a role in viral entry. Interacts with host RPSA that acts as a cellular attachment receptor for the virus. Also possesses intrinsic ribonuclease (RNase) activity that can inhibit the production of type I interferon and assist in the development of persistent infections. Cleaves preferentially NpU bonds. Binds to heparan sulfate on the host cells for entry. In terms of biological role, plays a role in cell attachment and subsequent fusion of viral and cellular membranes. Therefore, mediates together with envelope glycoprotein E2 the viral entry. Its function is as follows. Plays a role in cell attachment and subsequent fusion of viral and cellular membranes. Therefore, mediates together with envelope glycoprotein E1 the viral entry. Binds to host ADAM17 receptor for entry. Binds to host ANXA2 for entry. Binds to host MERTK for entry. Functionally, plays an essential role in the virus replication cycle by acting as a viroporin. Forms ion conductive pores, which alters the cell permeability allowing the transport of ions and other small molecules. Autoprotease that associates with the host chaperone JIV and cleaves the NS2-3 protein between NS2 and NS3. Also plays a role in the formation of infectious particles. In terms of biological role, plays a role in the regulation of viral RNA replication. Its function is as follows. Multifunctional protein that contains an N-terminal protease and a C-terminal helicase, playing essential roles in viral polyprotein processing and viral genome replication. The chymotrypsin-like serine protease activity utilizes NS4A as an essential cofactor and catalyzes the cleavage of the polyprotein leading to the release of NS4A, NS4B, NS5A, and NS5B. Plays a role in the inhibition of host NF-kappa-B activation by interacting with and inhibiting host TRAF6. Interacts with NS5B to enhance RNA-dependent RNA polymerase activity. Functionally, acts as a cofactor for the NS3 protease activity. Induces a specific membrane alteration that serves as a scaffold for the virus replication complex. Antagonizes host cell apoptosis by interacting with host ferritin heavy chain. The ORF4 protein physically binds host FTH1/FHC, resulting in the reduction of FTH1 protein levels in host cells. Reduction of FTH1 concentration further inhibits the accumulation of reactive oxygen in host cells, leading to reduced apoptosis. In terms of biological role, regulates viral RNA replication by interacting with the 3'-untranslated region of viral RNA in a dose-dependent manner. At small concentrations promotes viral synthesis by interacting with the polymerase NS5B while at large concentrations, inhibits replication. Its function is as follows. Replicates the viral (+) and (-) genome. The chain is Genome polyprotein from Sus scrofa (Pig).